The chain runs to 371 residues: 2-aminoethylphosphonate--pyruvate transaminase (371 aa).

At K198 the chain carries N6-(pyridoxal phosphate)lysine.

Belongs to the class-V pyridoxal-phosphate-dependent aminotransferase family. PhnW subfamily. Homodimer. The cofactor is pyridoxal 5'-phosphate.

It carries out the reaction (2-aminoethyl)phosphonate + pyruvate = phosphonoacetaldehyde + L-alanine. Its function is as follows. Involved in phosphonate degradation. The polypeptide is 2-aminoethylphosphonate--pyruvate transaminase (Syntrophobacter fumaroxidans (strain DSM 10017 / MPOB)).